Reading from the N-terminus, the 126-residue chain is Small ribosomal subunit protein uS13 (126 aa).

The interval 95 to 126 (GMPVRGQRTRTNARTRRGRRGQAIGIKKKVKK) is disordered.

Belongs to the universal ribosomal protein uS13 family. Part of the 30S ribosomal subunit. Forms a loose heterodimer with protein S19. Forms two bridges to the 50S subunit in the 70S ribosome.

Functionally, located at the top of the head of the 30S subunit, it contacts several helices of the 16S rRNA. In the 70S ribosome it contacts the 23S rRNA (bridge B1a) and protein L5 of the 50S subunit (bridge B1b), connecting the 2 subunits; these bridges are implicated in subunit movement. Contacts the tRNAs in the A and P-sites. The protein is Small ribosomal subunit protein uS13 of Chloroflexus aggregans (strain MD-66 / DSM 9485).